A 146-amino-acid polypeptide reads, in one-letter code: Large ribosomal subunit protein uL14 (146 aa).

It belongs to the universal ribosomal protein uL14 family.

This chain is Large ribosomal subunit protein uL14 (RPL23), found in Encephalitozoon cuniculi (strain GB-M1) (Microsporidian parasite).